We begin with the raw amino-acid sequence, 215 residues long: Elongation factor Ts (215 aa).

Residues 80–83 are involved in Mg(2+) ion dislocation from EF-Tu; it reads TDFV.

The protein belongs to the EF-Ts family.

Its subcellular location is the cytoplasm. In terms of biological role, associates with the EF-Tu.GDP complex and induces the exchange of GDP to GTP. It remains bound to the aminoacyl-tRNA.EF-Tu.GTP complex up to the GTP hydrolysis stage on the ribosome. This Heliobacterium modesticaldum (strain ATCC 51547 / Ice1) protein is Elongation factor Ts.